A 729-amino-acid chain; its full sequence is Transketolase (729 aa).

Residue histidine 97 coordinates substrate. Thiamine diphosphate contacts are provided by residues histidine 138 and 186 to 188; that span reads GPL. Aspartate 227 provides a ligand contact to Mg(2+). The thiamine diphosphate site is built by glycine 228 and asparagine 257. The Mg(2+) site is built by asparagine 257 and isoleucine 259. Substrate contacts are provided by histidine 332, arginine 423, and serine 450. Position 332 (histidine 332) interacts with thiamine diphosphate. Glutamate 477 functions as the Proton donor in the catalytic mechanism. Phenylalanine 503 is a thiamine diphosphate binding site. Substrate-binding residues include histidine 527, aspartate 535, and arginine 586.

It belongs to the transketolase family. Homodimer. Requires Mg(2+) as cofactor. The cofactor is Ca(2+). Mn(2+) is required as a cofactor. Co(2+) serves as cofactor. It depends on thiamine diphosphate as a cofactor.

The catalysed reaction is D-sedoheptulose 7-phosphate + D-glyceraldehyde 3-phosphate = aldehydo-D-ribose 5-phosphate + D-xylulose 5-phosphate. In terms of biological role, catalyzes the transfer of a two-carbon ketol group from a ketose donor to an aldose acceptor, via a covalent intermediate with the cofactor thiamine pyrophosphate. This Streptococcus pyogenes serotype M18 (strain MGAS8232) protein is Transketolase (tkt).